The primary structure comprises 161 residues: Putative pre-16S rRNA nuclease (161 aa).

This sequence belongs to the YqgF nuclease family.

Its subcellular location is the cytoplasm. In terms of biological role, could be a nuclease involved in processing of the 5'-end of pre-16S rRNA. The polypeptide is Putative pre-16S rRNA nuclease (Rhodospirillum rubrum (strain ATCC 11170 / ATH 1.1.1 / DSM 467 / LMG 4362 / NCIMB 8255 / S1)).